The chain runs to 472 residues: Glutamate--tRNA ligase 1 (472 aa).

Residues 13–23 carry the 'HIGH' region motif; the sequence is PSPTGYLHIGG. Zn(2+) contacts are provided by Cys102, Cys104, Cys129, and Glu131. A 'KMSKS' region motif is present at residues 239-243; it reads RLSKR. Lys242 provides a ligand contact to ATP.

This sequence belongs to the class-I aminoacyl-tRNA synthetase family. Glutamate--tRNA ligase type 1 subfamily. Monomer. Requires Zn(2+) as cofactor.

It is found in the cytoplasm. The catalysed reaction is tRNA(Glu) + L-glutamate + ATP = L-glutamyl-tRNA(Glu) + AMP + diphosphate. Functionally, catalyzes the attachment of glutamate to tRNA(Glu) in a two-step reaction: glutamate is first activated by ATP to form Glu-AMP and then transferred to the acceptor end of tRNA(Glu). This chain is Glutamate--tRNA ligase 1, found in Syntrophus aciditrophicus (strain SB).